A 233-amino-acid polypeptide reads, in one-letter code: Ribonuclease HII (233 aa).

The RNase H type-2 domain maps to 21–211 (KVIAGVDEVG…LDALPQWRHL (191 aa)). Residues Asp27, Glu28, and Asp119 each coordinate a divalent metal cation.

Belongs to the RNase HII family. It depends on Mn(2+) as a cofactor. Mg(2+) is required as a cofactor.

The protein resides in the cytoplasm. It catalyses the reaction Endonucleolytic cleavage to 5'-phosphomonoester.. Endonuclease that specifically degrades the RNA of RNA-DNA hybrids. The chain is Ribonuclease HII from Streptomyces avermitilis (strain ATCC 31267 / DSM 46492 / JCM 5070 / NBRC 14893 / NCIMB 12804 / NRRL 8165 / MA-4680).